Here is a 221-residue protein sequence, read N- to C-terminus: GNVDFDSESPRKPEIQNEIIDLHNSLRRSVNPTASNMLKMEWYPEAAANAERWAFRCILSHSPRDSRVIGGIKCGENIYMSTSPMKWTAIIHKWHGEEKDFVYGQGASPANAVVGHYTQIVWYKSYRSGCAAAYCPSSEYKYFYVCQYCPAGNMQGKTATPYTSGPPCGDCPSACDNGLCTNPCTHEDKFTNCKDLVKQGCNNNYLKTNCPASCSCHNEII.

Residue G1 is a signal peptide. An SCP domain is found at 21 to 148; sequence DLHNSLRRSV…EYKYFYVCQY (128 aa). 8 disulfide bridges follow: C57-C135, C74-C149, C130-C146, C168-C175, C171-C180, C184-C216, C193-C210, and C201-C214. The ShKT domain occupies 184-216; the sequence is CTHEDKFTNCKDLVKQGCNNNYLKTNCPASCSC.

It belongs to the CRISP family. Expressed by the venom gland.

It is found in the secreted. Its function is as follows. Blocks contraction of smooth muscle elicited by high potassium-induced depolarization, but does not block caffeine-stimulated contraction. May target voltage-gated calcium channels in smooth muscle. The polypeptide is Cysteine-rich venom protein (Vipera nikolskii (Nikolsky's adder)).